We begin with the raw amino-acid sequence, 309 residues long: tRNA dimethylallyltransferase (309 aa).

Residue 9–16 participates in ATP binding; it reads GPTAVGKT. Residue 11 to 16 participates in substrate binding; it reads TAVGKT. An interaction with substrate tRNA region spans residues 34-37; the sequence is DSMQ.

This sequence belongs to the IPP transferase family. As to quaternary structure, monomer. It depends on Mg(2+) as a cofactor.

It carries out the reaction adenosine(37) in tRNA + dimethylallyl diphosphate = N(6)-dimethylallyladenosine(37) in tRNA + diphosphate. Its function is as follows. Catalyzes the transfer of a dimethylallyl group onto the adenine at position 37 in tRNAs that read codons beginning with uridine, leading to the formation of N6-(dimethylallyl)adenosine (i(6)A). The protein is tRNA dimethylallyltransferase of Clostridium kluyveri (strain NBRC 12016).